A 198-amino-acid polypeptide reads, in one-letter code: N-acetyltransferase 9-like protein (198 aa).

Residues 34-178 (EEIRRLTGSE…KEITMELPGE (145 aa)) form the N-acetyltransferase domain.

Belongs to the acetyltransferase family. GNAT subfamily.

The chain is N-acetyltransferase 9-like protein from Caenorhabditis briggsae.